The sequence spans 454 residues: MHSAGLLMLTVAGYFTSGIPGNTASSDVAYLTPGTYINLSENILGLQTLRTFCYPGKRLTVSSLFETVEFVLAIGSDDYSQYGGKTPEEVLQHYKDKQSLFSITLFAQKRQLLQLSPFEQQCIGISSRQAYTVILNSIPLDLWRLAQFAVGILILFSARRLAKNSVFYYLVGIVIGICASLLVVIYLAAKLFPRRTMMYGVLIGGWTIGFYVIKQLADNLRLILITYRDHVLGYLVITGLISFLICYRIGPPKNPRSQTIVMWVLQAIGAVMAYFSSWHTSAVIFIMVLVFVAHYFPISWTNQIKFMYRRRFPLKRRMLTQEEYEQQTAVETSKSLADLRKYVNSPECKQWAVMGKLRDPLRFASFANGAPHLDDEEIEDHSRTIEESMDAAPEEESVEEPEEDKPAELLPLPNSQFRYQQAARNSEPEPESESDDSEEEEFFEQEVDLRQVVQ.

Residues 1 to 18 (MHSAGLLMLTVAGYFTSG) form the signal peptide. Residue N38 is glycosylated (N-linked (GlcNAc...) asparagine). A run of 5 helical transmembrane segments spans residues 138 to 158 (IPLDLWRLAQFAVGILILFSA), 166 to 186 (VFYYLVGIVIGICASLLVVIY), 197 to 217 (MMYGVLIGGWTIGFYVIKQLA), 231 to 251 (VLGYLVITGLISFLICYRIGP), and 280 to 300 (TSAVIFIMVLVFVAHYFPISW). Positions 388–405 (SMDAAPEEESVEEPEEDK) are enriched in acidic residues. Residues 388 to 454 (SMDAAPEEES…QEVDLRQVVQ (67 aa)) are disordered. Residues 414–424 (NSQFRYQQAAR) show a composition bias toward polar residues. A compositionally biased stretch (acidic residues) spans 428–446 (PEPESESDDSEEEEFFEQE).

It belongs to the NEMP family. Interacts with OTE. As to expression, expressed in both germline and somatic cells in the larval testis and prepupal ovary (at protein level). Also detected in the larval eye and larval wing disk (at protein level).

It is found in the nucleus inner membrane. Its function is as follows. Contributes to nuclear envelope stiffness in germ cells. Required for male and female fertility. In Drosophila melanogaster (Fruit fly), this protein is Nuclear envelope integral membrane protein.